The primary structure comprises 367 residues: tRNA-specific 2-thiouridylase MnmA (367 aa).

Residues 7 to 14 (AMSGGVDS) and M33 contribute to the ATP site. The Nucleophile role is filled by C108. The cysteines at positions 108 and 200 are disulfide-linked. G132 lines the ATP pocket. The segment at 150 to 152 (KDQ) is interaction with tRNA. C200 serves as the catalytic Cysteine persulfide intermediate. The interval 301-302 (RY) is interaction with tRNA.

This sequence belongs to the MnmA/TRMU family.

The protein localises to the cytoplasm. The enzyme catalyses S-sulfanyl-L-cysteinyl-[protein] + uridine(34) in tRNA + AH2 + ATP = 2-thiouridine(34) in tRNA + L-cysteinyl-[protein] + A + AMP + diphosphate + H(+). In terms of biological role, catalyzes the 2-thiolation of uridine at the wobble position (U34) of tRNA, leading to the formation of s(2)U34. The sequence is that of tRNA-specific 2-thiouridylase MnmA from Thermus thermophilus (strain ATCC BAA-163 / DSM 7039 / HB27).